Reading from the N-terminus, the 872-residue chain is MSSTAVSRARWSSAYASDPTEWERLFEGKWNVVSNILERKLIDPEHKVVYDELMSLLENMTNMCTLLMLEANSQPEPMIGPILDKFFTEQILERVLDWSIQLTDSLKSICQLAIIRIFEMIVSDSHSQNHCLLVHKPILNPLFRLCEWFQRADIYWRVSKSENKKTSEAEKMFVLLLNQICTKLVEDRTLLHFFFHSNQFVVFTELIPFLYSAGDTGQLARDAVLLILSVSAEDKSIAEYVTERTSFCQVLTTGLSACFSQLPRRILGDGGERLVEDEYRDFLADYHSALLFCNAIAQTAHSEVVGNIAEFFYTGFLTNVIKPAFLQNDREYIGASMVYLQMCIETIVEPLLVKSVVQMILTERDDNGTIFFEIVISYVKGGDKTSVTALSLIDSFIKLACEDVMLALVFRPLLTNHSATKKQLSVVYKASRGGHLSQAYLNCIPVCGLPCSFELYMFSTRIRMDARAEQCRKWKWKYDGVVAGSFVLPAESDDDATCHVSFSRMSSSRSSVSMAPYRYTNGTHPSFNINKVCALGKPREEDFSEMEDDLLEEDNDFILPNIDMEDFGEEMTASKVMTQSTIDYMHISGLDGSESDDAMPIRVEDSETDTEAPKSSFVLSGWREVNDMETFKQLLSKQEVKGERLPAENIMDFINEKYDSLKLGEDEKEGKEEKDLEENLIEEPRKRIVTDGFSIYAFPERSKLLQTILEGVETLCENELPFNTELFCLIADLATYPQPILAYYLFDPKQDSSEKHLLTILQSVQTRIDVMAEGIESFDTWIEKGLEALEARACRIRQQSRSSPRSADEHDSTLFYGRSTIPPPGRKPLLREPSHQETLDDQTARRTALAAILLSHLCQMLAAIVLQQSLII.

A disordered region spans residues 800 to 841 (SRSSPRSADEHDSTLFYGRSTIPPPGRKPLLREPSHQETLDD). The segment covering 829-841 (LLREPSHQETLDD) has biased composition (basic and acidic residues).

It belongs to the FHIP family.

This is FHIP family protein CBG19667 from Caenorhabditis briggsae.